The sequence spans 92 residues: Small ribosomal subunit protein uS19 (92 aa).

This sequence belongs to the universal ribosomal protein uS19 family.

Protein S19 forms a complex with S13 that binds strongly to the 16S ribosomal RNA. This is Small ribosomal subunit protein uS19 from Xanthobacter autotrophicus (strain ATCC BAA-1158 / Py2).